Reading from the N-terminus, the 439-residue chain is MEPWCGAEVRGQGPQGPRVPGASRSRSRALLLLLLLLLLLLPRRPAGERIRPRRPPRHAHPRPPLTRWRPSTGYLAAGASPGTLSTTVPTGPGVSCGSRGICPSGRLRLPRQAQTNQTTTAPPNSQTMAPLKTVGTLGMMDTTGSVLKTVHSSNLPFCGSSHEPDPTLRDPEAMTRRWPWMVSVQANGSHICAGILIASQWVLTVAHCLSQNHVNYIVRAGSPWINQTAGTSSDVPVHRVIINHGYQPRRYWSWVGRAHDIGLLKLKWGLKYSKYVWPICLPGLDYVVEDSSLCTVTGWGYPRANGIWPQFQSLQEKEVSILNSKKCDHFYHKFSRISSLVRIINPQMICASDNNREEFCYEITGEPLVCSSDGTWYLVGMMSWGPGCKKSEAPPIFLQVSYYRPWIWDRLSGEPLALPAPSRTLLLAFLLLLILLGTL.

Disordered stretches follow at residues 1–22 (MEPWCGAEVRGQGPQGPRVPGA) and 48–130 (ERIR…TMAP). The first 47 residues, 1-47 (MEPWCGAEVRGQGPQGPRVPGASRSRSRALLLLLLLLLLLLPRRPAG), serve as a signal peptide directing secretion. Low complexity predominate over residues 9-21 (VRGQGPQGPRVPG). The Extracellular segment spans residues 48–415 (ERIRPRRPPR…WIWDRLSGEP (368 aa)). Residues 51–61 (RPRRPPRHAHP) show a composition bias toward basic residues. Low complexity predominate over residues 112-127 (QAQTNQTTTAPPNSQT). N-linked (GlcNAc...) asparagine glycosylation is found at Asn-116 and Asn-187. The Peptidase S1 domain occupies 157–412 (FCGSSHEPDP…YRPWIWDRLS (256 aa)). The cysteines at positions 192 and 208 are disulfide-linked. The Charge relay system role is filled by His-207. The N-linked (GlcNAc...) asparagine glycan is linked to Asn-226. Asp-260 acts as the Charge relay system in catalysis. Cystine bridges form between Cys-294–Cys-370, Cys-327–Cys-350, and Cys-360–Cys-388. Catalysis depends on Thr-364, which acts as the Charge relay system. The helical transmembrane segment at 416–436 (LALPAPSRTLLLAFLLLLILL) threads the bilayer. Topologically, residues 437–439 (GTL) are cytoplasmic.

Belongs to the peptidase S1 family.

Its subcellular location is the membrane. In terms of biological role, may be involved in proteolysis through its threonine endopeptidase activity. This is Probable threonine protease PRSS50 (Prss50) from Mus musculus (Mouse).